The chain runs to 2000 residues: Sodium channel protein type 3 subunit alpha (2000 aa).

At 1–128 the chain is on the cytoplasmic side; sequence MAQALLVPPG…KIAIKILVHS (128 aa). The disordered stretch occupies residues 28–60; it reads RAAEEKAKKPKKEQDNDDENKPKPNSDLEAGKN. The segment covering 46 to 57 has biased composition (basic and acidic residues); the sequence is ENKPKPNSDLEA. The stretch at 110–455 is one I repeat; sequence ILTPLNPVRK…QQMLEQLKKQ (346 aa). The chain crosses the membrane as a helical span at residues 129-146; it reads LFSMLIMCTILTNCVFMT. Residues 147–152 lie on the Extracellular side of the membrane; the sequence is LSNPPD. The helical transmembrane segment at 153 to 174 threads the bilayer; the sequence is WTKNVEYTFTGIYTFESLIKIL. Residues 175-188 are Cytoplasmic-facing; it reads ARGFCLEDFTFLRD. The chain crosses the membrane as a helical span at residues 189–206; it reads PWNWLDFSVIVMAYVTEF. The Extracellular portion of the chain corresponds to 207 to 213; that stretch reads VSLGNVS. Asn-211 carries N-linked (GlcNAc...) asparagine glycosylation. Residues 214-235 form a helical membrane-spanning segment; it reads ALRTFRVLRALKTISVIPGLKT. Topologically, residues 236–249 are cytoplasmic; it reads IVGALIQSVKKLSD. Residues 250–269 form a helical membrane-spanning segment; sequence VMILTVFCLSVFALIGLQLF. Residues 270 to 369 lie on the Extracellular side of the membrane; the sequence is MGNLRNKCLQ…NYGYTSFDTF (100 aa). N-linked (GlcNAc...) asparagine glycosylation is found at Asn-290, Asn-296, Asn-302, Asn-307, and Asn-339. The pore-forming intramembrane region spans 370–386; sequence SWAFLSLFRLMTQDYWE. Residues 387–397 are Extracellular-facing; it reads NLYQLTLRAAG. The helical transmembrane segment at 398 to 424 threads the bilayer; it reads KTYMIFFVLVIFLGSFYLVNLILAVVA. Topologically, residues 425–761 are cytoplasmic; the sequence is MAYEEQNQAT…LVNLIVMDPF (337 aa). Ser-484, Ser-485, and Ser-486 each carry phosphoserine. Disordered stretches follow at residues 493-528, 587-631, and 662-681; these read SKSA…KSES, VGSE…ASMS, and ALTS…ETEV. Residues 500 to 509 are compositionally biased toward basic residues; the sequence is RNRRKKRRQR. Composition is skewed to basic and acidic residues over residues 510-528 and 596-610; these read EHLE…KSES and DEHS…RRDS. The span at 662–678 shows a compositional bias: polar residues; that stretch reads ALTSPTGQLPPEGTTTE. The stretch at 742–1014 is one II repeat; sequence CCDAWLKVKH…QIAVGRMQKG (273 aa). A helical membrane pass occupies residues 762-779; sequence VDLAITICIVLNTLFMAM. The Extracellular segment spans residues 780–787; the sequence is EHYPMTEQ. Residues 788–812 traverse the membrane as a helical segment; sequence FSSVLTVGNLVFTGIFTAEMVLKII. Over 813-822 the chain is Cytoplasmic; it reads AMDPYYYFQE. The helical transmembrane segment at 823-842 threads the bilayer; that stretch reads GWNIFDGIIVSLSLMELGLS. The Extracellular segment spans residues 843-846; sequence NVEG. Residues 847–865 form a helical membrane-spanning segment; sequence LSVLRSFRLLRVFKLAKSW. The Cytoplasmic segment spans residues 866 to 883; the sequence is PTLNMLIKIIGNSVGALG. Residues 884-904 form a helical membrane-spanning segment; the sequence is NLTLVLAIIVFIFAVVGMQLF. Over 905-929 the chain is Extracellular; it reads GKSYKECVCKINDDCTLPRWHMNDF. A disulfide bond links Cys-913 and Cys-919. The segment at residues 930-945 is an intramembrane region (pore-forming); the sequence is FHSFLIVFRVLCGEWI. At 946-956 the chain is on the extracellular side; sequence ETMWDCMEVAG. Cys-951 and Cys-960 are joined by a disulfide. Residues 957-983 traverse the membrane as a helical segment; sequence QTMCLIVFMLVMVIGNLVVLNLFLALL. Over 984–1205 the chain is Cytoplasmic; it reads LSSFSSDNLA…RKTCYSIVEH (222 aa). Residues 1118–1162 are disordered; sequence EEFSSESELEESKEKLNATSSSEGSTVDVVLPREGEQAETEPEED. An III repeat occupies 1188–1499; that stretch reads KGKIWWNLRK…KKYYNAMKKL (312 aa). A helical membrane pass occupies residues 1206 to 1226; it reads NWFETFIVFMILLSSGALAFE. Over 1227-1238 the chain is Extracellular; that stretch reads DIYIEQRKTIKT. The chain crosses the membrane as a helical span at residues 1239 to 1260; that stretch reads MLEYADKVFTYIFILEMLLKWV. The Cytoplasmic segment spans residues 1261–1266; sequence AYGFQT. The chain crosses the membrane as a helical span at residues 1267–1292; sequence YFTNAWCWLDFLIVDVSLVSLVANAL. Residues 1293-1301 are Extracellular-facing; that stretch reads GYSELGAIK. The helical transmembrane segment at 1302–1320 threads the bilayer; sequence SLRTLRALRPLRALSRFEG. The Cytoplasmic portion of the chain corresponds to 1321–1333; sequence MRVVVNALVGAIP. A helical transmembrane segment spans residues 1334 to 1356; it reads SIMNVLLVCLIFWLIFSIMGVNL. Topologically, residues 1357–1402 are extracellular; it reads FAGKFYHCVNMTTGNMFDISDVNNLSDCQALGKQARWKNVKVNFDN. The cysteines at positions 1364 and 1384 are disulfide-linked. Asn-1366 and Asn-1380 each carry an N-linked (GlcNAc...) asparagine glycan. The segment at residues 1403-1419 is an intramembrane region (pore-forming); sequence VGAGYLALLQVATFKGW. Topologically, residues 1420–1442 are extracellular; that stretch reads MDIMYAAVDSRDVKLQPVYEENL. The chain crosses the membrane as a helical span at residues 1443 to 1468; sequence YMYLYFVIFIIFGSFFTLNLFIGVII. Residues 1469–1526 lie on the Cytoplasmic side of the membrane; it reads DNFNQQKKKFGGQDIFMTEEQKKYYNAMKKLGSKKPQKPIPRPANKFQGMVFDFVTRQ. Ser-1501 is modified (phosphoserine; by PKC). The IV repeat unit spans residues 1508–1806; that stretch reads IPRPANKFQG…WEKFDPDATQ (299 aa). A helical membrane pass occupies residues 1527 to 1545; the sequence is VFDISIMILICLNMVTMMV. Residues 1546–1553 lie on the Extracellular side of the membrane; it reads ETDDQGKY. The helical transmembrane segment at 1554-1577 threads the bilayer; it reads MTLVLSRINLVFIVLFTGEFVLKL. The Cytoplasmic portion of the chain corresponds to 1578 to 1587; it reads VSLRHYYFTI. A helical transmembrane segment spans residues 1588-1605; it reads GWNIFDFVVVILSIVGMF. At 1606 to 1617 the chain is on the extracellular side; it reads LAEMIEKYFVSP. Residues 1618-1640 form a helical membrane-spanning segment; sequence TLFRVIRLARIGRILRLIKGAKG. At 1641 to 1653 the chain is on the cytoplasmic side; it reads IRTLLFALMMSLP. Residues 1654-1677 form a helical membrane-spanning segment; it reads ALFNIGLLLFLVMFIYAIFGMSNF. The Extracellular segment spans residues 1678–1699; sequence AYVKKEAGIDDMFNFETFGNSM. An intramembrane region (pore-forming) is located at residues 1700 to 1712; the sequence is ICLFQITTSAGWD. Residues 1713 to 1744 are Extracellular-facing; that stretch reads GLLAPILNSAPPDCDPDTIHPGSSVKGDCGNP. A helical membrane pass occupies residues 1745 to 1770; the sequence is SVGIFFFVSYIIISFLVVVNMYIAVI. The Cytoplasmic portion of the chain corresponds to 1771 to 2000; it reads LENFSVATEE…KGKEVRENQK (230 aa). In terms of domain architecture, IQ spans 1900–1929; the sequence is EEVSAAIIQRNFRCYLLKQRLKNISSNYNK. Residues 1949 to 2000 are disordered; sequence LNGNSTPEKTDGSSSTTSPPSYDSVTKPDKEKFEKDKPEKESKGKEVRENQK. The segment covering 1974-2000 has biased composition (basic and acidic residues); sequence TKPDKEKFEKDKPEKESKGKEVRENQK.

Belongs to the sodium channel (TC 1.A.1.10) family. Nav1.3/SCN3A subfamily. In terms of assembly, heterooligomer of an alpha subunit, SCN3A, and 1 to 3 regulatory beta subunits including SCN1B and SCN2B; disulfide-linked with some beta subunits like SCN2B. Interacts with NEDD4L; could regulate expression of SCN3A at the plasma membrane through ubiquitination-regulated endocytosis. Interacts with the conotoxin GVIIJ. May be ubiquitinated by NEDD4L; which would promote its endocytosis. In terms of processing, phosphorylation at Ser-1501 by PKC in a highly conserved cytoplasmic loop slows inactivation of the sodium channel and reduces peak sodium currents. As to expression, expressed in enterochromaffin cells in both colon and small bowel (at protein level).

The protein resides in the cell membrane. The protein localises to the basal cell membrane. The catalysed reaction is Na(+)(in) = Na(+)(out). Functionally, pore-forming subunit of Nav1.3, a voltage-gated sodium (Nav) channel that directly mediates the depolarizing phase of action potentials in excitable membranes. Navs, also called VGSCs (voltage-gated sodium channels) or VDSCs (voltage-dependent sodium channels), operate by switching between closed and open conformations depending on the voltage difference across the membrane. In the open conformation they allow Na(+) ions to selectively pass through the pore, along their electrochemical gradient. The influx of Na+ ions provokes membrane depolarization, initiating the propagation of electrical signals throughout cells and tissues. In some secretory cell types, it also participates in cell excitability through membrane depolarization and regulates cells responsiveness to stimuli triggering secretion. For instance, it controls the release of serotonin/5-hydroxytryptamine by enterochromaffin cells and is required for both glucagon- and glucose-induced insulin secretion in pancreatic endocrine cells. The protein is Sodium channel protein type 3 subunit alpha of Homo sapiens (Human).